Consider the following 196-residue polypeptide: RNA pyrophosphohydrolase (196 aa).

The region spanning 6–149 (GYRPNVGIVI…KRDVYRKVMK (144 aa)) is the Nudix hydrolase domain. Residues 38–59 (GGINDNESAEQAMYRELHEEVG) carry the Nudix box motif.

The protein belongs to the Nudix hydrolase family. RppH subfamily. A divalent metal cation serves as cofactor.

Functionally, accelerates the degradation of transcripts by removing pyrophosphate from the 5'-end of triphosphorylated RNA, leading to a more labile monophosphorylated state that can stimulate subsequent ribonuclease cleavage. The sequence is that of RNA pyrophosphohydrolase from Haemophilus influenzae (strain ATCC 51907 / DSM 11121 / KW20 / Rd).